The following is an 876-amino-acid chain: Alanine--tRNA ligase (876 aa).

Lys74 carries the N6-acetyllysine modification. Zn(2+)-binding residues include His564, His568, Cys666, and His670.

This sequence belongs to the class-II aminoacyl-tRNA synthetase family. Homotetramer. It depends on Zn(2+) as a cofactor.

Its subcellular location is the cytoplasm. The enzyme catalyses tRNA(Ala) + L-alanine + ATP = L-alanyl-tRNA(Ala) + AMP + diphosphate. Catalyzes the attachment of alanine to tRNA(Ala) in a two-step reaction: alanine is first activated by ATP to form Ala-AMP and then transferred to the acceptor end of tRNA(Ala). Also edits incorrectly charged Ser-tRNA(Ala) and Gly-tRNA(Ala) via its editing domain. This is Alanine--tRNA ligase from Shigella boydii serotype 18 (strain CDC 3083-94 / BS512).